The following is a 384-amino-acid chain: 1-deoxy-D-xylulose 5-phosphate reductoisomerase (384 aa).

NADPH-binding residues include T10, G11, S12, I13, G36, K37, N38, and N121. K122 contributes to the 1-deoxy-D-xylulose 5-phosphate binding site. E123 is a binding site for NADPH. D147 provides a ligand contact to Mn(2+). Residues S148, E149, S173, and H196 each contribute to the 1-deoxy-D-xylulose 5-phosphate site. E149 serves as a coordination point for Mn(2+). Position 202 (G202) interacts with NADPH. Positions 209, 214, 215, and 218 each coordinate 1-deoxy-D-xylulose 5-phosphate. E218 serves as a coordination point for Mn(2+).

Belongs to the DXR family. Mg(2+) is required as a cofactor. Requires Mn(2+) as cofactor.

It catalyses the reaction 2-C-methyl-D-erythritol 4-phosphate + NADP(+) = 1-deoxy-D-xylulose 5-phosphate + NADPH + H(+). It participates in isoprenoid biosynthesis; isopentenyl diphosphate biosynthesis via DXP pathway; isopentenyl diphosphate from 1-deoxy-D-xylulose 5-phosphate: step 1/6. In terms of biological role, catalyzes the NADPH-dependent rearrangement and reduction of 1-deoxy-D-xylulose-5-phosphate (DXP) to 2-C-methyl-D-erythritol 4-phosphate (MEP). The sequence is that of 1-deoxy-D-xylulose 5-phosphate reductoisomerase from Exiguobacterium sibiricum (strain DSM 17290 / CCUG 55495 / CIP 109462 / JCM 13490 / 255-15).